A 199-amino-acid polypeptide reads, in one-letter code: 3-hexulose-6-phosphate isomerase (199 aa).

The SIS domain occupies 44 to 186 (LARQIVQPGR…FQSLWDHTEV (143 aa)). Residues Ser-62 and 101–106 (SGSGTT) contribute to the substrate site. Glu-166 functions as the Proton acceptor in the catalytic mechanism.

It belongs to the SIS family. PHI subfamily.

The enzyme catalyses D-arabino-hex-3-ulose 6-phosphate = beta-D-fructose 6-phosphate. It participates in one-carbon metabolism; formaldehyde assimilation via RuMP pathway; D-fructose 6-phosphate from D-ribulose 5-phosphate and formaldehyde: step 2/2. Functionally, catalyzes the isomerization between 3-hexulose 6-phosphate and fructose 6-phosphate. The polypeptide is 3-hexulose-6-phosphate isomerase (rmpB) (Mycobacterium gastri).